The sequence spans 266 residues: Phosphatidylglycerol--prolipoprotein diacylglyceryl transferase (266 aa).

Transmembrane regions (helical) follow at residues 10–30 (VALA…LIGI), 56–76 (LVFW…VLFY), 92–112 (WKGG…VWWF), 120–140 (FFQL…AGRI), 171–191 (PSQL…LWLF), 199–219 (ASVS…VEFV), and 233–253 (WLTM…ALMV). An a 1,2-diacyl-sn-glycero-3-phospho-(1'-sn-glycerol)-binding site is contributed by Arg139.

Belongs to the Lgt family.

The protein localises to the cell inner membrane. The enzyme catalyses L-cysteinyl-[prolipoprotein] + a 1,2-diacyl-sn-glycero-3-phospho-(1'-sn-glycerol) = an S-1,2-diacyl-sn-glyceryl-L-cysteinyl-[prolipoprotein] + sn-glycerol 1-phosphate + H(+). The protein operates within protein modification; lipoprotein biosynthesis (diacylglyceryl transfer). Functionally, catalyzes the transfer of the diacylglyceryl group from phosphatidylglycerol to the sulfhydryl group of the N-terminal cysteine of a prolipoprotein, the first step in the formation of mature lipoproteins. This is Phosphatidylglycerol--prolipoprotein diacylglyceryl transferase from Pseudomonas aeruginosa (strain LESB58).